A 1548-amino-acid chain; its full sequence is Zinc finger MYM-type protein 4 (1548 aa).

Alanine 2 is modified (N-acetylalanine). Threonine 107 bears the Phosphothreonine mark. Phosphoserine is present on residues serine 110 and serine 122. Residues lysine 140 and lysine 149 each participate in a glycyl lysine isopeptide (Lys-Gly) (interchain with G-Cter in SUMO2) cross-link. The residue at position 162 (serine 162) is a Phosphoserine. The disordered stretch occupies residues 162-189 (SKETFSGKEKNRDLTYEREKRLDKPHKD). Residue lysine 195 forms a Glycyl lysine isopeptide (Lys-Gly) (interchain with G-Cter in SUMO2) linkage. Serine 197 bears the Phosphoserine mark. Residues lysine 201 and lysine 232 each participate in a glycyl lysine isopeptide (Lys-Gly) (interchain with G-Cter in SUMO2) cross-link. At serine 242 the chain carries Phosphoserine. Residue lysine 250 forms a Glycyl lysine isopeptide (Lys-Gly) (interchain with G-Cter in SUMO1); alternate linkage. Lysine 250 participates in a covalent cross-link: Glycyl lysine isopeptide (Lys-Gly) (interchain with G-Cter in SUMO2); alternate. Glycyl lysine isopeptide (Lys-Gly) (interchain with G-Cter in SUMO2) cross-links involve residues lysine 260, lysine 271, lysine 273, lysine 289, lysine 327, lysine 400, lysine 428, and lysine 430. 9 MYM-type zinc fingers span residues 362 to 402 (QLFC…PKDV), 414 to 457 (KDFC…RHEV), 464 to 499 (HKLCSDACFSKFRSANNLTMNCCENCGGYCYSGSGQ), 510 to 544 (KKFCSSSCITAYKQKSAKITPCALCKSLRSSAEMI), 554 to 592 (ELFCSVNCLSAYRVKMVTSAGVQVQCNSCKTSAIPQYHL), 600 to 631 (RNFCSYSCVVAFQNLFNKPTGMNSSVVPLSQG), 708 to 742 (FQFCGKNCSDEYKKINNVMAMCEYCKIEKIVKETV), 749 to 788 (KSFCSEGCKLLYKHDLAKRWGNHCKMCSYCLQTSPKLVQN), and 795 to 829 (EEFCCEECMSKYTVLFYQMAKCDACKRQGKLSESL). Serine 1030 carries the post-translational modification Phosphoserine. Glycyl lysine isopeptide (Lys-Gly) (interchain with G-Cter in SUMO2) cross-links involve residues lysine 1035 and lysine 1061. Phosphoserine occurs at positions 1064 and 1071. Glycyl lysine isopeptide (Lys-Gly) (interchain with G-Cter in SUMO2) cross-links involve residues lysine 1080 and lysine 1127. The span at 1124–1134 (SELKQFSKGET) shows a compositional bias: basic and acidic residues. 2 disordered regions span residues 1124 to 1183 (SELK…KSIV) and 1231 to 1260 (KCGGVEQASSSPRSDPLGSTQDHALSQESS). The span at 1160–1181 (SRTRRRHRDGFPQPRRRGRKKS) shows a compositional bias: basic residues. Serine 1181 and serine 1256 each carry phosphoserine. Residues 1237 to 1260 (QASSSPRSDPLGSTQDHALSQESS) show a composition bias toward polar residues. Lysine 1431 is covalently cross-linked (Glycyl lysine isopeptide (Lys-Gly) (interchain with G-Cter in SUMO2)). 3 positions are modified to phosphoserine: serine 1539, serine 1542, and serine 1547.

As to expression, expressed at higher level in heart, skeletal muscle, kidney and liver.

Functionally, plays a role in the regulation of cell morphology and cytoskeletal organization. The protein is Zinc finger MYM-type protein 4 (ZMYM4) of Homo sapiens (Human).